Consider the following 131-residue polypeptide: Sec-independent protein translocase protein TatB (131 aa).

Residues 2 to 22 form a helical membrane-spanning segment; it reads FANIGWWEMLVLVMVGLVVLG. The disordered stretch occupies residues 90–131; it reads DSLFTGDFDRPTPKKPDAAGSAGPDATEQIGAGPIPFDSDAT. The segment covering 96–106 has biased composition (basic and acidic residues); sequence DFDRPTPKKPD.

The protein belongs to the TatB family. As to quaternary structure, the Tat system comprises two distinct complexes: a TatABC complex, containing multiple copies of TatA, TatB and TatC subunits, and a separate TatA complex, containing only TatA subunits. Substrates initially bind to the TatABC complex, which probably triggers association of the separate TatA complex to form the active translocon.

Its subcellular location is the cell membrane. In terms of biological role, part of the twin-arginine translocation (Tat) system that transports large folded proteins containing a characteristic twin-arginine motif in their signal peptide across membranes. Together with TatC, TatB is part of a receptor directly interacting with Tat signal peptides. TatB may form an oligomeric binding site that transiently accommodates folded Tat precursor proteins before their translocation. In Mycobacterium tuberculosis (strain ATCC 25177 / H37Ra), this protein is Sec-independent protein translocase protein TatB.